The sequence spans 92 residues: Small ribosomal subunit protein uS19 (92 aa).

Residues M1–K27 form a disordered region. Residues P9–K27 are compositionally biased toward basic and acidic residues.

Belongs to the universal ribosomal protein uS19 family.

Protein S19 forms a complex with S13 that binds strongly to the 16S ribosomal RNA. In Staphylococcus saprophyticus subsp. saprophyticus (strain ATCC 15305 / DSM 20229 / NCIMB 8711 / NCTC 7292 / S-41), this protein is Small ribosomal subunit protein uS19.